Consider the following 349-residue polypeptide: DNA polymerase IV (349 aa).

Residues 3 to 187 (VLFVDFDYFF…LDISKVPGVG (185 aa)) enclose the UmuC domain. Residues aspartate 7 and aspartate 105 each coordinate Mg(2+). Residue glutamate 106 is part of the active site.

It belongs to the DNA polymerase type-Y family. Monomer. Mg(2+) is required as a cofactor.

Its subcellular location is the cytoplasm. The enzyme catalyses DNA(n) + a 2'-deoxyribonucleoside 5'-triphosphate = DNA(n+1) + diphosphate. Its function is as follows. Poorly processive, error-prone DNA polymerase involved in untargeted mutagenesis. Copies undamaged DNA at stalled replication forks, which arise in vivo from mismatched or misaligned primer ends. These misaligned primers can be extended by PolIV. Exhibits no 3'-5' exonuclease (proofreading) activity. May be involved in translesional synthesis. This Metallosphaera sedula (strain ATCC 51363 / DSM 5348 / JCM 9185 / NBRC 15509 / TH2) protein is DNA polymerase IV.